Consider the following 1121-residue polypeptide: PR domain zinc finger protein 10 (1121 aa).

Disordered regions lie at residues 1–24 and 92–125; these read MEAK…NTPQ and TEAS…MDDW. The span at 106–124 shows a compositional bias: acidic residues; that stretch reads VDSEDEEEDNDSEDSEMDD. Residues 173-290 enclose the SET domain; the sequence is LPLVLYIDRF…PKQELKVWYA (118 aa). The tract at residues 192 to 295 is N-terminal PR domain; essential for transcriptional activation; it reads IPKRTQFGPL…KVWYAASYAE (104 aa). The C2H2-type 1 zinc-finger motif lies at 319-341; sequence WPCYECNRRFMSSEQLQQHLNMH. 2 disordered regions span residues 350-387 and 419-473; these read RPKS…SADK and ESME…PHLT. A compositionally biased stretch (basic residues) spans 351-374; that stretch reads PKSRGRGRGRKRFGGARRPGRRTK. C2H2-type zinc fingers lie at residues 500–522, 529–551, 557–579, 585–608, 613–635, 641–664, 696–719, 741–764, and 803–826; these read FKCP…MRFH, HVCH…LVLH, YSCL…VGIH, FLCP…RSFH, FQCS…MLRH, FLCS…QRMH, FKCR…SKRH, YYCQ…LKNH, and VCCP…RKKH. The segment at 871–1101 is C-terminal glutamine-rich region; essential for transcriptional activation; it reads QAMTELSQTL…PAGGQQATTQ (231 aa). Residues 1077 to 1097 are disordered; that stretch reads VPSTATQGHPDPLEQPAGGQQ.

The protein belongs to the class V-like SAM-binding methyltransferase superfamily.

It localises to the nucleus. Transcriptional activator, essential for early embryonic development and survival of embryonic stem cells (ESCs). Supports cell growth and survival during early development by transcriptionally activating the expression of the translation initiation factor EIF3B, to sustain global translation. Activates the transcription of FLNC. This chain is PR domain zinc finger protein 10 (prdm10), found in Danio rerio (Zebrafish).